Reading from the N-terminus, the 334-residue chain is Guanine nucleotide-binding protein subunit beta-like protein (334 aa).

WD repeat units lie at residues 14-55, 65-104, 106-145, 152-192, 215-256, and 257-294; these read GHKD…DSEF, GHSK…SILL, GHGR…VLKM, MHRG…HLQT, DESK…QSFD, and AIVP…VIAS.

The protein belongs to the WD repeat G protein beta family.

The chain is Guanine nucleotide-binding protein subunit beta-like protein from Encephalitozoon cuniculi (strain GB-M1) (Microsporidian parasite).